The sequence spans 351 residues: Adenine deaminase (351 aa).

Zn(2+) is bound by residues His20, His22, and His200. The active-site Proton donor is the Glu203. Residue Asp281 coordinates Zn(2+). Substrate is bound at residue Asp282.

Belongs to the metallo-dependent hydrolases superfamily. Adenosine and AMP deaminases family. Adenine deaminase type 2 subfamily. Zn(2+) serves as cofactor.

It catalyses the reaction adenine + H2O + H(+) = hypoxanthine + NH4(+). In terms of biological role, catalyzes the hydrolytic deamination of adenine to hypoxanthine. Plays an important role in the purine salvage pathway and in nitrogen catabolism. The protein is Adenine deaminase of Cupriavidus necator (strain ATCC 17699 / DSM 428 / KCTC 22496 / NCIMB 10442 / H16 / Stanier 337) (Ralstonia eutropha).